We begin with the raw amino-acid sequence, 273 residues long: Orotidine 5'-phosphate decarboxylase (273 aa).

The Proton donor role is filled by Lys97.

Belongs to the OMP decarboxylase family. Type 2 subfamily.

The catalysed reaction is orotidine 5'-phosphate + H(+) = UMP + CO2. Its pathway is pyrimidine metabolism; UMP biosynthesis via de novo pathway; UMP from orotate: step 2/2. The sequence is that of Orotidine 5'-phosphate decarboxylase from Cellvibrio japonicus (strain Ueda107) (Pseudomonas fluorescens subsp. cellulosa).